The chain runs to 131 residues: Large ribosomal subunit protein bL17 (131 aa).

Belongs to the bacterial ribosomal protein bL17 family. In terms of assembly, part of the 50S ribosomal subunit. Contacts protein L32.

This is Large ribosomal subunit protein bL17 from Hamiltonella defensa subsp. Acyrthosiphon pisum (strain 5AT).